The chain runs to 450 residues: MFS-type transporter avaK (450 aa).

Helical transmembrane passes span 18 to 38 (VMALNSLLILFTNFAIFLSMP), 100 to 120 (RVVCIYSDVLPLSLVWLSGLL), 148 to 168 (AVALLRLHSVFIVAKIFAAPA), 171 to 191 (ALVALTSAWTPFLISLAMLFV), 244 to 264 (APIIIVNLVASITKSSNHFLL), 280 to 300 (LVLVIREASSLLTYLVLMPAA), 329 to 349 (FGFFSIALAGTPVVYVLALAF), and 408 to 428 (GWLGIPYIAAGLFFITVLVAV).

It belongs to the major facilitator superfamily.

The protein localises to the membrane. The protein operates within secondary metabolite biosynthesis. In terms of biological role, MFS-type transporter; part of the cluster that mediates the biosynthesis of a highly modified cyclo-arginine-tryptophan dipeptide (cRW). This Aspergillus versicolor protein is MFS-type transporter avaK.